A 353-amino-acid polypeptide reads, in one-letter code: Quinolinate synthase (353 aa).

Iminosuccinate-binding residues include His-47 and Ser-68. Cys-113 provides a ligand contact to [4Fe-4S] cluster. Residues 139-141 (YAN) and Ser-156 contribute to the iminosuccinate site. Residue Cys-200 participates in [4Fe-4S] cluster binding. Iminosuccinate-binding positions include 226–228 (HPE) and Thr-243. A [4Fe-4S] cluster-binding site is contributed by Cys-297.

It belongs to the quinolinate synthase family. Type 1 subfamily. The cofactor is [4Fe-4S] cluster.

It localises to the cytoplasm. The catalysed reaction is iminosuccinate + dihydroxyacetone phosphate = quinolinate + phosphate + 2 H2O + H(+). It participates in cofactor biosynthesis; NAD(+) biosynthesis; quinolinate from iminoaspartate: step 1/1. In terms of biological role, catalyzes the condensation of iminoaspartate with dihydroxyacetone phosphate to form quinolinate. This Vibrio cholerae serotype O1 (strain ATCC 39541 / Classical Ogawa 395 / O395) protein is Quinolinate synthase.